We begin with the raw amino-acid sequence, 148 residues long: Snaclec 2 (148 aa).

An N-terminal signal peptide occupies residues 1–23 (MGRFIFVSFGLLVVFLSLSGTEA). 3 disulfides stabilise this stretch: Cys27–Cys38, Cys55–Cys144, and Cys121–Cys136. A C-type lectin domain is found at 34-145 (YDQNCYKAFE…CSGTHSFVCK (112 aa)).

This sequence belongs to the snaclec family. As to quaternary structure, heterodimer; disulfide-linked. As to expression, expressed by the venom gland.

It is found in the secreted. Functionally, interferes with one step of hemostasis (modulation of platelet aggregation, or coagulation cascade, for example). The protein is Snaclec 2 of Echis ocellatus (Ocellated saw-scaled viper).